Here is a 347-residue protein sequence, read N- to C-terminus: Syntaxin-32 (347 aa).

Over 1 to 325 the chain is Cytoplasmic; the sequence is MSARHGQSSY…RYLNSISSNR (325 aa). Disordered regions lie at residues 172–191 and 208–251; these read HESRRQLFSSNASKESTNPF and PLPW…QQMV. 2 stretches are compositionally biased toward polar residues: residues 177 to 191 and 213 to 222; these read QLFSSNASKESTNPF and NGSSSSSSQL. Over residues 237-249 the composition is skewed to low complexity; sequence QQSQQQQQQQQQQ. Residues 255-317 form the t-SNARE coiled-coil homology domain; it reads DTYMQGRAEA…EGAQSQLARY (63 aa). A helical; Anchor for type IV membrane protein transmembrane segment spans residues 326–346; sequence WLMMKIFFVLIAFLMIFLFFV. Residue Ala-347 is a topological domain, vesicular.

This sequence belongs to the syntaxin family. In terms of assembly, part of the t-SNARE complex.

It localises to the golgi apparatus. The protein resides in the cis-Golgi network membrane. Vesicle trafficking protein that functions in the secretory pathway. This chain is Syntaxin-32 (SYP32), found in Arabidopsis thaliana (Mouse-ear cress).